We begin with the raw amino-acid sequence, 564 residues long: DNA ligase B (564 aa).

Lys130 serves as the catalytic N6-AMP-lysine intermediate.

Belongs to the NAD-dependent DNA ligase family. LigB subfamily.

The catalysed reaction is NAD(+) + (deoxyribonucleotide)n-3'-hydroxyl + 5'-phospho-(deoxyribonucleotide)m = (deoxyribonucleotide)n+m + AMP + beta-nicotinamide D-nucleotide.. Catalyzes the formation of phosphodiester linkages between 5'-phosphoryl and 3'-hydroxyl groups in double-stranded DNA using NAD as a coenzyme and as the energy source for the reaction. This Klebsiella pneumoniae subsp. pneumoniae (strain ATCC 700721 / MGH 78578) protein is DNA ligase B.